The following is a 608-amino-acid chain: Sensor protein kinase WalK (608 aa).

2 helical membrane-spanning segments follow: residues 14–34 (LVIVYVLLIIIGMQIIGLYFT) and 183–203 (IFIVGTAISLLITVILGFFIA). The HAMP domain occupies 204–256 (RTITKPITDMRNQTVEMSRGNYTQRVKIYGNDEIGELALAFNNLSKRVQEAQA). Positions 261–331 (EKRRLDSVIT…EIQENNDSFL (71 aa)) constitute a PAS domain. The Zn(2+) site is built by His-271, Asp-274, His-364, and Glu-368. Residues 314-378 (LEDEFKLEEI…QQQVERERRE (65 aa)) enclose the PAC domain. Residues 382 to 600 (NVSHELRTPL…SIFITLPCEV (219 aa)) form the Histidine kinase domain. His-385 is modified (phosphohistidine; by autocatalysis).

In terms of assembly, forms homodimers. Forms homooligomers. Autophosphorylated.

It is found in the cell membrane. The catalysed reaction is ATP + protein L-histidine = ADP + protein N-phospho-L-histidine.. With respect to regulation, by zinc. Zinc-binding negatively regulates WalK kinase activity and thus autophosphorylation. In terms of biological role, member of the two-component regulatory system WalK/WalR that regulates genes involved in cell wall metabolism, virulence regulation, biofilm production, oxidative stress resistance and antibiotic resistance via direct or indirect regulation of autolysins. Functions as a sensor protein kinase which is autophosphorylated at a histidine residue in the dimerization domain and transfers its phosphate group to the conserved aspartic acid residue in the regulatory domain of WalR. In turn, WalR binds to the upstream promoter regions of the target genes to positively and negatively regulate their expression. This chain is Sensor protein kinase WalK (walK), found in Staphylococcus aureus (strain Newman).